Reading from the N-terminus, the 365-residue chain is tRNA/tmRNA (uracil-C(5))-methyltransferase (365 aa).

Q189, Y217, N222, E238, and D298 together coordinate S-adenosyl-L-methionine. C323 serves as the catalytic Nucleophile. Catalysis depends on E357, which acts as the Proton acceptor.

It belongs to the class I-like SAM-binding methyltransferase superfamily. RNA M5U methyltransferase family. TrmA subfamily.

It catalyses the reaction uridine(54) in tRNA + S-adenosyl-L-methionine = 5-methyluridine(54) in tRNA + S-adenosyl-L-homocysteine + H(+). It carries out the reaction uridine(341) in tmRNA + S-adenosyl-L-methionine = 5-methyluridine(341) in tmRNA + S-adenosyl-L-homocysteine + H(+). In terms of biological role, dual-specificity methyltransferase that catalyzes the formation of 5-methyluridine at position 54 (m5U54) in all tRNAs, and that of position 341 (m5U341) in tmRNA (transfer-mRNA). In Saccharophagus degradans (strain 2-40 / ATCC 43961 / DSM 17024), this protein is tRNA/tmRNA (uracil-C(5))-methyltransferase.